Reading from the N-terminus, the 932-residue chain is MLKTLLGDPNKRKLKKYQPDVVEINLLEPEMQALSDQELQSKTGEFKRQLEQGKSLDELLPEAFAVVREASRRVLGLRHFDVQLLGGMILHDGQIAEMKTGEGKTLVSTLPAYLNALTGKGVQIITVNDYLARRDAEWMGQVHRFLGLSVGLIQQSMPPQERQKNYACDITYATNSEIGFDYLRDNMATSMAEVVLRPFHYCVIDEVDSVLIDEARTPLIISGQVERPTEKYLRATAIADALQKEEHYEVDEKARNILLTDEGFIEAEKLLGVKDLFDSQDPWAHYIFNAVKAKELFIKDVNYIIRGGEIVIVDEFTGRVMPGRRWSDGLHQAIEAKEGLDIQNESQTLATITYQNLFLLYPKLAGMTGTAKTEEAEFEKIYKLEVTVVPTNRATGRRDLPDVVYKNEMAKWRAVAAECAEFHQAGRPVLVGTTSVEKSEVLSQLLNQAGIPHNLLNAKPENVERESEIVAQAGRKGAVTIATNMAGRGTDIILGGNADYMARLKVREYFMPRIVMPESDDPLAMMRIMMGDGNASGGQGFAPQGNRPQKTWKASPNIFPTKLSRETEQLLKAAVDFAVKQYGERSIPELQAEDIVAIASEKAPTEDPVVQRLREAYNQIRSEYETFTHQEHDEVVQFGGLHVIGTERHESRRVDNQLRGRAGRQGDPGSTRFFLSLEDNLLRIFGGDRVAGLMNAFRVEEDMPIESRILTGSLENAQRKVETYYYDIRKQVFEYDDVMNNQRRAIYAERRRVLEGEDLKERVLEYAERTMDDIVEAYVNPDLPPEEWDLNSMVGKVKEFVNLLADLEPQQLEDLSMAEMQMFLHEQVRIAYDRKEAEIDQLQPGLMRQAERFFILQQIDTLWREHLQAMDALRESVGLRGYGQQDPLVEYKSEGYELFLDMMTAIRRNVVYSLFQFQPQYQPPEEMPSEVV.

ATP contacts are provided by residues Q83, 101-105, and D491; that span reads GEGKT.

This sequence belongs to the SecA family. As to quaternary structure, monomer and homodimer. Part of the essential Sec protein translocation apparatus which comprises SecA, SecYEG and auxiliary proteins SecDF. Other proteins may also be involved.

The protein resides in the cell inner membrane. It is found in the cellular thylakoid membrane. The protein localises to the cytoplasm. The catalysed reaction is ATP + H2O + cellular proteinSide 1 = ADP + phosphate + cellular proteinSide 2.. Part of the Sec protein translocase complex. Interacts with the SecYEG preprotein conducting channel. Has a central role in coupling the hydrolysis of ATP to the transfer of proteins into and across the cell membrane, serving as an ATP-driven molecular motor driving the stepwise translocation of polypeptide chains across the membrane. Its function is as follows. Probably participates in protein translocation into and across both the cytoplasmic and thylakoid membranes in cyanobacterial cells. The polypeptide is Protein translocase subunit SecA (Cyanothece sp. (strain PCC 7425 / ATCC 29141)).